Consider the following 203-residue polypeptide: Membrane-spanning 4-domains subfamily A member 13 (203 aa).

4 helical membrane passes run 15–35 (VLGV…YFLL), 56–76 (MGTS…VKAA), 84–104 (ILCT…AASL), and 141–161 (FAIA…SSIV).

It belongs to the MS4A family.

It is found in the membrane. Functionally, may be involved in signal transduction as a component of a multimeric receptor complex. The chain is Membrane-spanning 4-domains subfamily A member 13 (Ms4a13) from Mus musculus (Mouse).